A 467-amino-acid polypeptide reads, in one-letter code: Sialic acid-binding Ig-like lectin 7 (467 aa).

An N-terminal signal peptide occupies residues 1 to 18 (MLLLLLLPLLWGRERVEG). Residues 19 to 353 (QKSNRKDYSL…KMRPVSGVLL (335 aa)) lie on the Extracellular side of the membrane. The region spanning 39–122 (GMCVHVRCSF…ARMSDAGRYF (84 aa)) is the Ig-like V-type domain. An intrachain disulfide couples Cys46 to Cys106. Asn105 is a glycosylation site (N-linked (GlcNAc...) asparagine). N-acetylneuraminate is bound by residues Arg124 and 131 to 135 (KWNYK). N-linked (GlcNAc...) asparagine glycans are attached at residues Asn142 and Asn165. An Ig-like C2-type 1 domain is found at 150–233 (PNILIPGTLE…AGVTTNRTIQ (84 aa)). Cys168 and Cys217 form a disulfide bridge. Residues Asn229, Asn235, Asn242, and Asn260 are each glycosylated (N-linked (GlcNAc...) asparagine). Positions 240–336 (PQNLTVTVFQ…GSQHVSLNLS (97 aa)) constitute an Ig-like C2-type 2 domain. A disulfide bond links Cys276 and Cys320. N-linked (GlcNAc...) asparagine glycosylation is present at Asn334. The helical transmembrane segment at 354–376 (GAVGGAGATALVFLSFCVIFIVV) threads the bilayer. Topologically, residues 377–467 (RSCRKKSARP…NEYSEIKIPK (91 aa)) are cytoplasmic. The segment covering 401-412 (IRGSASQGNLTE) has biased composition (polar residues). Positions 401–431 (IRGSASQGNLTESWADDNPRHHGLAAHSSGE) are disordered. Ser429 carries the phosphoserine modification. Residues 435-440 (IQYAPL) carry the ITIM motif motif. Residues 443 to 467 (HKGEPQDLSGQEATNNEYSEIKIPK) form a disordered region. A compositionally biased stretch (polar residues) spans 450 to 460 (LSGQEATNNEY).

It belongs to the immunoglobulin superfamily. SIGLEC (sialic acid binding Ig-like lectin) family. As to quaternary structure, interacts with PTPN6/SHP-1 upon phosphorylation. Tyrosine phosphorylated. In terms of tissue distribution, predominantly expressed by resting and activated natural killer cells and at lower levels by granulocytes and monocytes. High expression found in placenta, liver, lung, spleen, and peripheral blood leukocytes.

Its subcellular location is the membrane. In terms of biological role, putative adhesion molecule that mediates sialic-acid dependent binding to cells. Preferentially binds to alpha-2,3- and alpha-2,6-linked sialic acid. Also binds disialogangliosides (disialogalactosyl globoside, disialyl lactotetraosylceramide and disialyl GalNAc lactotetraoslylceramide). The sialic acid recognition site may be masked by cis interactions with sialic acids on the same cell surface. In the immune response, may act as an inhibitory receptor upon ligand induced tyrosine phosphorylation by recruiting cytoplasmic phosphatase(s) via their SH2 domain(s) that block signal transduction through dephosphorylation of signaling molecules. Mediates inhibition of natural killer cells cytotoxicity. May play a role in hemopoiesis. Inhibits differentiation of CD34+ cell precursors towards myelomonocytic cell lineage and proliferation of leukemic myeloid cells (in vitro). This is Sialic acid-binding Ig-like lectin 7 (SIGLEC7) from Homo sapiens (Human).